The primary structure comprises 834 residues: WW domain-containing adapter protein with coiled-coil homolog (834 aa).

3 disordered regions span residues 1–247 (MVMH…WSEH), 268–411 (KPKE…SVAT), and 430–504 (VTGA…GAKG). Over residues 22 to 31 (HTSYQSSKYS) the composition is skewed to low complexity. Basic and acidic residues predominate over residues 33–50 (SKRDYERDRSSNYRDRDL). A compositionally biased stretch (gly residues) spans 53-77 (GAGGGGGGGSAGGGGGGSGNGGGPL). Positions 96–108 (RSHDLRDRSDHRG) are enriched in basic and acidic residues. Over residues 109 to 119 (GGGGNGRGGSG) the composition is skewed to gly residues. Composition is skewed to basic and acidic residues over residues 127–168 (KMRD…DRRG), 181–246 (SSRE…DWSE), and 268–303 (KPKE…DRFS). In terms of domain architecture, WW spans 244 to 271 (WSEHVSSSGKMYYYNCKTEISQWEKPKE). Polar residues-rich tracts occupy residues 304-314 (RSTYKHSNSSR) and 350-363 (GDST…YSLS). The span at 369–384 (HGGGPGGGGPGGGGGS) shows a compositional bias: gly residues. Low complexity-rich tracts occupy residues 402 to 411 (TANSSASVAT) and 431 to 466 (TGAT…LRNS). The span at 472-496 (GSTSGTTVPTLGSQDPHQHHLNSNA) shows a compositional bias: polar residues.

In terms of tissue distribution, expressed in adult head and thorax and in larval central nervous system and fat body.

The protein resides in the nucleus. The protein localises to the lysosome. Acts as a linker between gene transcription and histone H2B monoubiquitination at 'Lys-118'. Regulates the cell-cycle checkpoint activation in response to DNA damage. Positive regulator of amino acid starvation-induced autophagy. Also acts as a negative regulator of basal autophagy. Positively regulates mTor activity. Promotes, in an energy-dependent manner, the assembly of the TTT complex and the RUVBL complex composed of pont and rept into the TTT-RUVBL complex. This leads to dimerization of the mTORC1 complex and its subsequent activation. May negatively regulate the ubiquitin proteasome pathway. Required for habituation, a form of non-associative learning. This chain is WW domain-containing adapter protein with coiled-coil homolog, found in Drosophila melanogaster (Fruit fly).